Here is a 189-residue protein sequence, read N- to C-terminus: Peptidyl-tRNA hydrolase (189 aa).

Y14 is a tRNA binding site. The Proton acceptor role is filled by H19. Residues Y64, N66, and N112 each contribute to the tRNA site.

It belongs to the PTH family. In terms of assembly, monomer.

Its subcellular location is the cytoplasm. The catalysed reaction is an N-acyl-L-alpha-aminoacyl-tRNA + H2O = an N-acyl-L-amino acid + a tRNA + H(+). In terms of biological role, hydrolyzes ribosome-free peptidyl-tRNAs (with 1 or more amino acids incorporated), which drop off the ribosome during protein synthesis, or as a result of ribosome stalling. Catalyzes the release of premature peptidyl moieties from peptidyl-tRNA molecules trapped in stalled 50S ribosomal subunits, and thus maintains levels of free tRNAs and 50S ribosomes. In Brevibacillus brevis (strain 47 / JCM 6285 / NBRC 100599), this protein is Peptidyl-tRNA hydrolase.